We begin with the raw amino-acid sequence, 95 residues long: Small ribosomal subunit protein uS19 (95 aa).

Positions 73–95 (EFSPTRTYRGHGADKNAKGSKKK) are disordered.

The protein belongs to the universal ribosomal protein uS19 family.

In terms of biological role, protein S19 forms a complex with S13 that binds strongly to the 16S ribosomal RNA. The protein is Small ribosomal subunit protein uS19 of Deinococcus geothermalis (strain DSM 11300 / CIP 105573 / AG-3a).